The following is a 243-amino-acid chain: Type III pantothenate kinase (243 aa).

6–13 lines the ATP pocket; it reads DIGNTVAK. Residues Tyr-86 and 93 to 96 contribute to the substrate site; that span reads GYDR. Asp-95 serves as the catalytic Proton acceptor. Asp-116 provides a ligand contact to K(+). Thr-119 lines the ATP pocket. Residue Thr-171 participates in substrate binding.

The protein belongs to the type III pantothenate kinase family. Homodimer. It depends on NH4(+) as a cofactor. K(+) serves as cofactor.

Its subcellular location is the cytoplasm. It carries out the reaction (R)-pantothenate + ATP = (R)-4'-phosphopantothenate + ADP + H(+). It participates in cofactor biosynthesis; coenzyme A biosynthesis; CoA from (R)-pantothenate: step 1/5. Catalyzes the phosphorylation of pantothenate (Pan), the first step in CoA biosynthesis. This is Type III pantothenate kinase from Bacteroides fragilis (strain YCH46).